The following is an 831-amino-acid chain: Molybdenum cofactor sulfurase (831 aa).

The residue at position 262 (Lys-262) is an N6-(pyridoxal phosphate)lysine. Cys-422 is a catalytic residue. An MOSC domain is found at 651–823 (AWLSEFLGKP…LSIGSHVIPK (173 aa)).

This sequence belongs to the class-V pyridoxal-phosphate-dependent aminotransferase family. MOCOS subfamily. The cofactor is pyridoxal 5'-phosphate.

It catalyses the reaction Mo-molybdopterin + L-cysteine + AH2 = thio-Mo-molybdopterin + L-alanine + A + H2O. It participates in cofactor biosynthesis; molybdopterin biosynthesis. Functionally, sulfurates the molybdenum cofactor. Sulfation of molybdenum is essential for xanthine dehydrogenase (XDH) and aldehyde oxidase (ADO) enzymes in which molybdenum cofactor is liganded by 1 oxygen and 1 sulfur atom in active form. This chain is Molybdenum cofactor sulfurase (mocos), found in Danio rerio (Zebrafish).